Reading from the N-terminus, the 230-residue chain is MEIRQIVYPGEKIDLEGQKPRNGLYEENDEYYSEYFGVVQKSDKFIDIVPFNGPYMPRINDKVIGKVIDVSATMWTVDINSPYFSLMHMNDTPWHVTSGDLRKYLNVGDYIYAKVSILNEIKESWLSLKDVNLRKLEEGSIIYIKAPKVPRVIGKAGNMINMIKSETNTKIIVGQNGLIWIDGEPENVDLAINAIGMVEKEAHTFGLTDRVKAYLDKMKGGNNGRSEVNQ.

Positions 60–129 (NDKVIGKVID…EIKESWLSLK (70 aa)) constitute an S1 motif domain. The 59-residue stretch at 137-195 (EEGSIIYIKAPKVPRVIGKAGNMINMIKSETNTKIIVGQNGLIWIDGEPENVDLAINAI) folds into the KH domain.

It belongs to the RRP4 family. As to quaternary structure, component of the archaeal exosome complex. Forms a trimer of Rrp4 and/or Csl4 subunits. The trimer associates with a hexameric ring-like arrangement composed of 3 Rrp41-Rrp42 heterodimers.

It localises to the cytoplasm. Functionally, non-catalytic component of the exosome, which is a complex involved in RNA degradation. Increases the RNA binding and the efficiency of RNA degradation. Confers strong poly(A) specificity to the exosome. In Picrophilus torridus (strain ATCC 700027 / DSM 9790 / JCM 10055 / NBRC 100828 / KAW 2/3), this protein is Exosome complex component Rrp4.